The chain runs to 576 residues: MENMKVLLGLICLMVPLLSLEIDVCTEYPNQIVLFLSVNEIDIRKCPLTPNKMHGDTIIWYKNDSKTPISADRDSRIHQQNEHLWFVPAKVEDSGYYYCIVRNSTYCLKTKVTVTVLENDPGLCYSTQATFPQRLHIAGDGSLVCPYVSYFKDENNELPEVQWYKNCKPLLLDNVSFFGVKDKLLVRNVAEEHRGDYICRMSYTFRGKQYPVTRVIQFITIDENKRDRPVILSPRNETIEADPGSMIQLICNVTGQFSDLVYWKWNGSEIEWNDPFLAEDYQFVEHPSTKRKYTLITTLNISEVKSQFYRYPFICVVKNTNIFESAHVQLIYPVPDFKNYLIGGFIILTATIVCCVCIYKVFKVDIVLWYRDSCSGFLPSKASDGKTYDAYILYPKTLGEGSFSDLDTFVFKLLPEVLEGQFGYKLFIYGRDDYVGEDTIEVTNENVKKSRRLIIILVRDMGGFSWLGQSSEEQIAIYNALIQEGIKIVLLELEKIQDYEKMPDSIQFIKQKHGVICWSGDFQERPQSAKTRFWKNLRYQMPAQRRSPLSKHRLLTLDPVRDTKEKLPAATHLPLG.

An N-terminal signal peptide occupies residues 1 to 19; it reads MENMKVLLGLICLMVPLLS. At 20–338 the chain is on the extracellular side; sequence LEIDVCTEYP…QLIYPVPDFK (319 aa). 3 cysteine pairs are disulfide-bonded: C25–C107, C46–C99, and C145–C199. 3 consecutive Ig-like C2-type domains span residues 25–115, 121–213, and 229–329; these read CTEY…VTVT, PGLC…YPVT, and PVIL…AHVQ. N-linked (GlcNAc...) asparagine glycans are attached at residues N63, N103, N174, N236, N252, N266, and N300. C251 and C315 are oxidised to a cystine. Residues 339 to 359 form a helical membrane-spanning segment; sequence NYLIGGFIILTATIVCCVCIY. Residues 360–576 lie on the Cytoplasmic side of the membrane; it reads KVFKVDIVLW…LPAATHLPLG (217 aa). A TIR domain is found at 386 to 541; that stretch reads KTYDAYILYP…RFWKNLRYQM (156 aa). The active site involves E473. A Phosphotyrosine modification is found at Y499. T556 is subject to Phosphothreonine; by PKC.

This sequence belongs to the interleukin-1 receptor family. In terms of assembly, the interleukin-1 receptor complex is a heterodimer of IL1R1 and IL1RAP. Interacts with PIK3R1. Interacts with IL1A. In terms of processing, a soluble form (sIL1R1) is probably produced by proteolytic cleavage at the cell surface (shedding). Rapidly phosphorylated on Tyr-499 in response to IL-1, which creates a SH2 binding site for the PI 3-kinase regulatory subunit PIK3R1. In terms of tissue distribution, isoform 2 is expressed in various brain tissues.

It is found in the membrane. The protein resides in the cell membrane. It localises to the secreted. It catalyses the reaction NAD(+) + H2O = ADP-D-ribose + nicotinamide + H(+). Its function is as follows. Receptor for IL1A, IL1B and IL1RN. After binding to interleukin-1 associates with the coreceptor IL1RAP to form the high affinity interleukin-1 receptor complex which mediates interleukin-1-dependent activation of NF-kappa-B, MAPK and other pathways. Signaling involves the recruitment of adapter molecules such as TOLLIP, MYD88, and IRAK1 or IRAK2 via the respective TIR domains of the receptor/coreceptor subunits. Binds ligands with comparable affinity and binding of antagonist IL1RN prevents association with IL1RAP to form a signaling complex. Involved in IL1B-mediated costimulation of IFNG production from T-helper 1 (Th1) cells. Functionally, unable to mediate canonical IL-1 signaling. Cooperates with IL1RAP isoform 3 to mediate IL1B-induced neuronal activity including IL1B-potentiated NMDA-induced calcium influx mediated by Akt kinase activation. The polypeptide is Interleukin-1 receptor type 1 (Il1r1) (Mus musculus (Mouse)).